The following is a 387-amino-acid chain: Krueppel-like factor 17 (387 aa).

Disordered stretches follow at residues phenylalanine 28–valine 54, serine 213–serine 234, and arginine 257–serine 277. Residues aspartate 30 to arginine 46 show a composition bias toward polar residues. Residues arginine 257–serine 270 are compositionally biased toward basic and acidic residues. 3 consecutive C2H2-type zinc fingers follow at residues tyrosine 280–histidine 304, tyrosine 310–histidine 334, and histidine 340–histidine 362. Positions glutamine 357–leucine 387 are disordered.

The protein belongs to the Sp1 C2H2-type zinc-finger protein family.

Its subcellular location is the nucleus. Transcription repressor that binds to the promoter of target genes and prevents their expression. Acts as a negative regulator of epithelial-mesenchymal transition and metastasis in breast cancer. Specifically binds the 5'-CACCC-3' sequence in the promoter of ID1, a key metastasis regulator in breast cancer, and repress its expression. May be a germ cell-specific transcription factor that plays important roles in spermatid differentiation and oocyte development. The polypeptide is Krueppel-like factor 17 (KLF17) (Sus scrofa (Pig)).